Consider the following 256-residue polypeptide: MQIKIGEIESKLNKIIEEEGAAYFVLIDPDEKNYREIANHVKDYADAIIIGGSIGIINLDEVTKDIKEITGLPIILFPGNVDGVTKEADAVFFMSLMNSKNTYWNMTAPTLGALTIKKYGLETLPMAYLGIEPISKTAVGFVGEVNEIPQKKPEIAGLYSLSASYFGMRWAYLEAGSGAEYPVSNEMVGISKKLSGINIIVGGGIRTPEVAYEKVMSGADVIVTGTLTEKDPQAVVEMKKAIKKAGLDKLKMLSKK.

Mg(2+) is bound by residues D28 and S53. Sn-glycerol 1-phosphate-binding positions include Y172–G178, G203–G204, and G225–T226.

The protein belongs to the GGGP/HepGP synthase family. Group II subfamily. Mg(2+) is required as a cofactor.

It localises to the cytoplasm. It carries out the reaction sn-glycerol 1-phosphate + (2E,6E,10E)-geranylgeranyl diphosphate = sn-3-O-(geranylgeranyl)glycerol 1-phosphate + diphosphate. Its pathway is membrane lipid metabolism; glycerophospholipid metabolism. Functionally, prenyltransferase that catalyzes the transfer of the geranylgeranyl moiety of geranylgeranyl diphosphate (GGPP) to the C3 hydroxyl of sn-glycerol-1-phosphate (G1P). This reaction is the first ether-bond-formation step in the biosynthesis of archaeal membrane lipids. This is Geranylgeranylglyceryl phosphate synthase from Methanococcus maripaludis (strain DSM 14266 / JCM 13030 / NBRC 101832 / S2 / LL).